The following is a 208-amino-acid chain: MSDSAVVAAAVEPKVPKAKAAKAAKPTKVAKAKAPVAHPPYINMIKEAIKQLKDRKGASKQAILKFISQNYKLGDNVIQINAHLRQALKRGVTSKALVQAAGSGANGRFRVPEKAAAAKKPAAAKKPAAAKKPAAAKKATGEKKAKKPAAAKPKKAATGDKKVKKAKSPKKVAKPAAKKVAKSPAKKAAPKKIAKPAAKKAAKPAAKA.

At Ser-2 the chain carries N-acetylserine. Position 14 is an N6-methyllysine (Lys-14). One can recognise an H15 domain in the interval 37-113; sequence AHPPYINMIK…GANGRFRVPE (77 aa). The interval 101–208 is disordered; that stretch reads AGSGANGRFR…KKAAKPAAKA (108 aa). The segment covering 114 to 138 has biased composition (low complexity); sequence KAAAAKKPAAAKKPAAAKKPAAAKK. Basic residues-rich tracts occupy residues 144 to 155 and 162 to 202; these read KAKKPAAAKPKK and KVKK…KKAA.

It belongs to the histone H1/H5 family. In terms of assembly, interacts with nmad-1. Interacts (when monomethylated at Lys-14) with chromobox protein homolog hpl-1; the interaction is direct. Interacts (when monomethylated at Lys-14) with histone H3 (when trimethylated on 'Lys-27'); the interaction is direct. Methylation at lysine 14 is necessary to regulate male tail development.

Its subcellular location is the nucleus. It is found in the chromosome. The protein localises to the cytoplasm. Functionally, histones H1 are necessary for the condensation of nucleosome chains into higher-order structures. Probably does not act as global transcriptional repressor. Acting in concert with chromobox protein homologs hpl-1 and hpl-2, involved in reproduction, somatic gonad development, male tail development, and vulval cell fate decisions; perhaps as a result of modulating expression of Hox genes mab-5 and egl-5. Plays a role in linking epigenetic regulation with the innate immune response. The sequence is that of Histone 24 from Caenorhabditis elegans.